A 346-amino-acid polypeptide reads, in one-letter code: Phosphate acyltransferase (346 aa).

The protein belongs to the PlsX family. Homodimer. Probably interacts with PlsY.

The protein resides in the cytoplasm. It catalyses the reaction a fatty acyl-[ACP] + phosphate = an acyl phosphate + holo-[ACP]. Its pathway is lipid metabolism; phospholipid metabolism. Catalyzes the reversible formation of acyl-phosphate (acyl-PO(4)) from acyl-[acyl-carrier-protein] (acyl-ACP). This enzyme utilizes acyl-ACP as fatty acyl donor, but not acyl-CoA. This is Phosphate acyltransferase from Synechococcus elongatus (strain ATCC 33912 / PCC 7942 / FACHB-805) (Anacystis nidulans R2).